A 196-amino-acid chain; its full sequence is N-(5'-phosphoribosyl)anthranilate isomerase (196 aa).

The protein belongs to the TrpF family.

The catalysed reaction is N-(5-phospho-beta-D-ribosyl)anthranilate = 1-(2-carboxyphenylamino)-1-deoxy-D-ribulose 5-phosphate. Its pathway is amino-acid biosynthesis; L-tryptophan biosynthesis; L-tryptophan from chorismate: step 3/5. The chain is N-(5'-phosphoribosyl)anthranilate isomerase from Sulfurovum sp. (strain NBC37-1).